A 165-amino-acid chain; its full sequence is uncharacterized protein (165 aa).

2 consecutive transmembrane segments (helical) span residues 7–27 (LWLALVLLILSIPAVSAQITV) and 141–161 (KGTPGFEAFVAVAVIGSIALL).

Its subcellular location is the cell membrane. This is an uncharacterized protein from Archaeoglobus fulgidus (strain ATCC 49558 / DSM 4304 / JCM 9628 / NBRC 100126 / VC-16).